The sequence spans 124 residues: Salivary protein 15 Iric-3 (124 aa).

The first 22 residues, 1–22, serve as a signal peptide directing secretion; sequence MESFVAMKVVCIILLFVIAAEA. Residues Asn-82 and Asn-93 are each glycosylated (N-linked (GlcNAc...) asparagine). Residues 105–124 are CD4-binding; the sequence is GPNNQTCHKKDECVGYIPGC.

It belongs to the salp15 family. In terms of assembly, interacts with host CD4. Interacts with host DC-SIGN (CD209). Interacts with Borrelia outer surface protein C (OspC). Expressed in salivary glands. Detected in fed adult female.

The protein resides in the secreted. Its function is as follows. Salivary tick protein that downregulates host immune system by binding to both dendritic cells, and CD4(+) T cells. Specifically binds to the CD4 coreceptor on T cells. This interaction prevents the activation of the Src kinase, Lck, and its downstream substrate Zap-70, and results in deficient activation of PLCgamma1, the repression of calcium fluxes triggered by T-cell antigen receptor (TCR) ligation, and a subsequent reduction in interleukin-2 production. This salivary protein also binds to DC-SIGN (CD209) on dendritic cells (DC) and activates the Raf-1 kinase/MEK signaling pathway that results in down-regulating expression of pro-inflammatory cytokines. Furthermore, it inhibits T cell proliferation induced by DCs. In addition, it inhibits in vitro keratinocyte inflammation induced by Borrelia burgdorferi or by the major outer surface protein (OspC) of Borrelia. In addition, it downregulates chemokines and monocyte chemoattractant protein 1, as well as several antimicrobial peptides such as defensins, cathelicidin, psoriasin, and RNase 7. Apart from its immunomodulatory activities, it is also associated with protection of Borrelia spirochetes from antibody-mediated killing through its binding to OspC. In vivo, tests on different immune disease animal models show promising therapeutic results, e.g., in inhibiting HIV infection, experimental autoimmune encephalomyelitis, transplantation rejection, and asthma. This chain is Salivary protein 15 Iric-3, found in Ixodes ricinus (Common tick).